We begin with the raw amino-acid sequence, 378 residues long: Chaperone protein DnaJ (378 aa).

The 65-residue stretch at 6-70 folds into the J domain; sequence DYYDVLGVSR…QKRQQYDQFG (65 aa). Residues 137 to 219 form a CR-type zinc finger; it reads GKTSEISYSR…CHGKGVKTQK (83 aa). Residues Cys-150, Cys-153, Cys-167, Cys-170, Cys-193, Cys-196, Cys-207, and Cys-210 each contribute to the Zn(2+) site. CXXCXGXG motif repeat units lie at residues 150–157, 167–174, 193–200, and 207–214; these read CEVCKGSG, CDKCGGSG, CDKCAGSG, and CHNCHGKG.

This sequence belongs to the DnaJ family. Homodimer. Requires Zn(2+) as cofactor.

Its subcellular location is the cytoplasm. In terms of biological role, participates actively in the response to hyperosmotic and heat shock by preventing the aggregation of stress-denatured proteins and by disaggregating proteins, also in an autonomous, DnaK-independent fashion. Unfolded proteins bind initially to DnaJ; upon interaction with the DnaJ-bound protein, DnaK hydrolyzes its bound ATP, resulting in the formation of a stable complex. GrpE releases ADP from DnaK; ATP binding to DnaK triggers the release of the substrate protein, thus completing the reaction cycle. Several rounds of ATP-dependent interactions between DnaJ, DnaK and GrpE are required for fully efficient folding. Also involved, together with DnaK and GrpE, in the DNA replication of plasmids through activation of initiation proteins. This Lactobacillus delbrueckii subsp. bulgaricus (strain ATCC BAA-365 / Lb-18) protein is Chaperone protein DnaJ.